The sequence spans 547 residues: Chaperonin GroEL (547 aa).

ATP-binding positions include 30–33, K51, 87–91, G415, and D496; these read TLGP and DGTTT.

Belongs to the chaperonin (HSP60) family. In terms of assembly, forms a cylinder of 14 subunits composed of two heptameric rings stacked back-to-back. Interacts with the co-chaperonin GroES.

It localises to the cytoplasm. The catalysed reaction is ATP + H2O + a folded polypeptide = ADP + phosphate + an unfolded polypeptide.. Functionally, together with its co-chaperonin GroES, plays an essential role in assisting protein folding. The GroEL-GroES system forms a nano-cage that allows encapsulation of the non-native substrate proteins and provides a physical environment optimized to promote and accelerate protein folding. This Chlorobaculum parvum (strain DSM 263 / NCIMB 8327) (Chlorobium vibrioforme subsp. thiosulfatophilum) protein is Chaperonin GroEL.